A 223-amino-acid chain; its full sequence is MKFPLLLALLVGGASALHLSSETSDSKSPLMDENLPRDAEISGPEGEECPPGEELMPLEGEKEEGSGSEGVPGDEGAVSGQDVTDVDLQCPKEEDTTSLMGDSGCKTCRYLLVRRAECFDKAQSVCRRCYRGTLASIHSFSVNFGIQSAVRGINQGQVWIGGRIKGWGRCKRFRWVDGSSWNFAYWAAGQPCPGGGRCVTLCTQGGHWRLSHCVKRRPFICSY.

The signal sequence occupies residues 1 to 16; sequence MKFPLLLALLVGGASA. A propeptide spans 17–106 (acidic); the sequence is LHLSSETSDS…TSLMGDSGCK (90 aa). The segment at 20–81 is disordered; it reads SSETSDSKSP…PGDEGAVSGQ (62 aa). Residue threonine 23 is glycosylated (O-linked (GalNAc...) threonine; partial). O-linked (GalNAc...) serine glycosylation occurs at serine 24. An O-linked (Xyl...) (chondroitin sulfate) serine glycan is attached at serine 66. Positions 124–223 constitute a C-type lectin domain; the sequence is SVCRRCYRGT…VKRRPFICSY (100 aa). 2 cysteine pairs are disulfide-bonded: cysteine 126–cysteine 221 and cysteine 198–cysteine 213.

In terms of processing, nitrated.

It localises to the secreted. Its function is as follows. Cytotoxin and helminthotoxin. MBP also induces non-cytolytic histamine release from basophils. It is involved in antiparasitic defense mechanisms and immune hypersensitivity reactions. This Mus musculus (Mouse) protein is Bone marrow proteoglycan (Prg2).